We begin with the raw amino-acid sequence, 438 residues long: Serine hydroxymethyltransferase (438 aa).

Residues leucine 133 and 137 to 139 contribute to the (6S)-5,6,7,8-tetrahydrofolate site; that span reads GHL. An N6-(pyridoxal phosphate)lysine modification is found at lysine 242.

Belongs to the SHMT family. Homodimer. Pyridoxal 5'-phosphate is required as a cofactor.

The protein localises to the cytoplasm. It carries out the reaction (6R)-5,10-methylene-5,6,7,8-tetrahydrofolate + glycine + H2O = (6S)-5,6,7,8-tetrahydrofolate + L-serine. It functions in the pathway one-carbon metabolism; tetrahydrofolate interconversion. The protein operates within amino-acid biosynthesis; glycine biosynthesis; glycine from L-serine: step 1/1. Functionally, catalyzes the reversible interconversion of serine and glycine with tetrahydrofolate (THF) serving as the one-carbon carrier. This reaction serves as the major source of one-carbon groups required for the biosynthesis of purines, thymidylate, methionine, and other important biomolecules. Also exhibits THF-independent aldolase activity toward beta-hydroxyamino acids, producing glycine and aldehydes, via a retro-aldol mechanism. The protein is Serine hydroxymethyltransferase of Brucella ovis (strain ATCC 25840 / 63/290 / NCTC 10512).